Here is a 173-residue protein sequence, read N- to C-terminus: Probable lipoprotein EnvE (173 aa).

Positions methionine 1 to glycine 20 are cleaved as a signal peptide. Cysteine 21 is lipidated: N-palmitoyl cysteine. A lipid anchor (S-diacylglycerol cysteine) is attached at cysteine 21.

The protein localises to the cell membrane. This Salmonella typhimurium (strain LT2 / SGSC1412 / ATCC 700720) protein is Probable lipoprotein EnvE (envE).